Consider the following 184-residue polypeptide: MTWRSDDIWIELITGSRKISNFCWALILFLGSLGFLLVGTSSYLGRNLLSFFPPQQIIFFPQGIVMSFYGIAGLFISSYLWCTISWNVGSGYDRFDRKEGIVCIFRWGFPGKNRRIFLRFLIKDIQSVRIEVKEGIYARRVLYMDIRGQGSIPLTRTDENLTPREIEQKAAELAYFLRVPIEVF.

A run of 2 helical transmembrane segments spans residues 19–39 and 57–77; these read ISNFCWALILFLGSLGFLLVG and IIFFPQGIVMSFYGIAGLFIS.

The protein belongs to the Ycf4 family.

It is found in the plastid. The protein localises to the chloroplast thylakoid membrane. Its function is as follows. Seems to be required for the assembly of the photosystem I complex. In Solanum bulbocastanum (Wild potato), this protein is Photosystem I assembly protein Ycf4.